We begin with the raw amino-acid sequence, 179 residues long: FAD-dependent monooxygenase nscC (179 aa).

A signal peptide spans 1–21; it reads MGKQQETILIIGAGISGLATS. Glu-35 and Ala-46 together coordinate FAD. N-linked (GlcNAc...) asparagine glycosylation occurs at Asn-92. Arg-119 lines the FAD pocket. The N-linked (GlcNAc...) asparagine glycan is linked to Asn-170.

This sequence belongs to the paxM FAD-dependent monooxygenase family. FAD serves as cofactor.

Its pathway is secondary metabolite biosynthesis. Its function is as follows. FAD-dependent monooxygenase; part of the gene cluster that mediates the biosynthesis of neosartoricin B, a prenylated anthracenone that probably exhibits T-cell antiproliferative activity, suggestive of a physiological role as an immunosuppressive agent. The non-reducing polyketide synthase nscA probably synthesizes and cyclizes the decaketide backbone. The hydrolase nscB then mediates the product release through hydrolysis followed by spontaneous decarboxylation. The prenyltransferase nscD catalyzes the addition of the dimethylallyl group to the aromatic C5. The FAD-dependent monooxygenase nscC is then responsible for the stereospecific hydroxylation at C2. Neosartoricin B can be converted into two additional compounds neosartoricins C and D. Neosartoricin C is a spirocyclic compound that is cyclized through the attack of C3 hydroxyl on C14, followed by dehydration. On the other hand, neosartoricin D is a further cyclized compound in which attack of C2 on C14 in neosartoricin C results in the formation of the acetal-containing dioxabicyclo-octanone ring. Both of these compounds are novel and possibly represent related metabolites of the gene cluster. In Trichophyton equinum (strain ATCC MYA-4606 / CBS 127.97) (Horse ringworm fungus), this protein is FAD-dependent monooxygenase nscC.